Reading from the N-terminus, the 610-residue chain is Isocitrate dehydrogenase kinase/phosphatase (610 aa).

ATP contacts are provided by residues 359–365 (APGFKGT) and Lys380. Residue Asp419 is part of the active site.

It belongs to the AceK family.

It is found in the cytoplasm. The catalysed reaction is L-seryl-[isocitrate dehydrogenase] + ATP = O-phospho-L-seryl-[isocitrate dehydrogenase] + ADP + H(+). Its function is as follows. Bifunctional enzyme which can phosphorylate or dephosphorylate isocitrate dehydrogenase (IDH) on a specific serine residue. This is a regulatory mechanism which enables bacteria to bypass the Krebs cycle via the glyoxylate shunt in response to the source of carbon. When bacteria are grown on glucose, IDH is fully active and unphosphorylated, but when grown on acetate or ethanol, the activity of IDH declines drastically concomitant with its phosphorylation. The chain is Isocitrate dehydrogenase kinase/phosphatase from Rhodopseudomonas palustris (strain ATCC BAA-98 / CGA009).